The sequence spans 280 residues: uncharacterized protein (280 aa).

Belongs to the herpesviridae BDLF2 family.

This is an uncharacterized protein from Saimiri sciureus (Common squirrel monkey).